The chain runs to 428 residues: Glutamate-1-semialdehyde 2,1-aminomutase (428 aa).

An N6-(pyridoxal phosphate)lysine modification is found at Lys-267.

It belongs to the class-III pyridoxal-phosphate-dependent aminotransferase family. HemL subfamily. In terms of assembly, homodimer. Requires pyridoxal 5'-phosphate as cofactor.

It localises to the cytoplasm. The catalysed reaction is (S)-4-amino-5-oxopentanoate = 5-aminolevulinate. The protein operates within porphyrin-containing compound metabolism; protoporphyrin-IX biosynthesis; 5-aminolevulinate from L-glutamyl-tRNA(Glu): step 2/2. The polypeptide is Glutamate-1-semialdehyde 2,1-aminomutase (Desulforapulum autotrophicum (strain ATCC 43914 / DSM 3382 / VKM B-1955 / HRM2) (Desulfobacterium autotrophicum)).